The primary structure comprises 464 residues: Na(+)/H(+) antiporter NhaA 2 (464 aa).

Transmembrane regions (helical) follow at residues 53 to 73 (VGGI…NSPW), 96 to 116 (LTLG…VVGL), 134 to 154 (ALPI…FVLV), 165 to 185 (GWAI…AVIS), 195 to 215 (FLLT…AVFY), 219 to 239 (IKAW…VCAQ), 257 to 277 (VLVH…GFAV), 313 to 333 (IAIP…LSGL), 340 to 360 (PITL…ILVT), 378 to 398 (WVDV…SLLI), and 412 to 432 (FVKI…AIVL).

It belongs to the NhaA Na(+)/H(+) (TC 2.A.33) antiporter family.

It is found in the cell membrane. It carries out the reaction Na(+)(in) + 2 H(+)(out) = Na(+)(out) + 2 H(+)(in). Its function is as follows. Na(+)/H(+) antiporter that extrudes sodium in exchange for external protons. The chain is Na(+)/H(+) antiporter NhaA 2 from Mycolicibacterium vanbaalenii (strain DSM 7251 / JCM 13017 / BCRC 16820 / KCTC 9966 / NRRL B-24157 / PYR-1) (Mycobacterium vanbaalenii).